We begin with the raw amino-acid sequence, 228 residues long: uncharacterized protein (228 aa).

The segment at 194–228 (SRRADEHPAPSTEPHAAAVAPEPDFMAEPIPALEE) is disordered.

This is an uncharacterized protein from Treponema pallidum (strain Nichols).